The chain runs to 162 residues: Lipoprotein signal peptidase (162 aa).

The next 2 helical transmembrane spans lie at 66–86 (PFFI…FRKL) and 92–112 (LAAV…IDRV). Residues D119 and D137 contribute to the active site. Residues 132–152 (AFNVADSAICVGVALLALDMI) form a helical membrane-spanning segment.

It belongs to the peptidase A8 family.

The protein localises to the cell inner membrane. It catalyses the reaction Release of signal peptides from bacterial membrane prolipoproteins. Hydrolyzes -Xaa-Yaa-Zaa-|-(S,diacylglyceryl)Cys-, in which Xaa is hydrophobic (preferably Leu), and Yaa (Ala or Ser) and Zaa (Gly or Ala) have small, neutral side chains.. Its pathway is protein modification; lipoprotein biosynthesis (signal peptide cleavage). In terms of biological role, this protein specifically catalyzes the removal of signal peptides from prolipoproteins. The sequence is that of Lipoprotein signal peptidase from Geobacter metallireducens (strain ATCC 53774 / DSM 7210 / GS-15).